The chain runs to 120 residues: uncharacterized protein (120 aa).

A helical membrane pass occupies residues 63 to 83 (IDMSCVICFNFSCHLFVVIFI).

It localises to the membrane. This is an uncharacterized protein from Saccharomyces cerevisiae (strain ATCC 204508 / S288c) (Baker's yeast).